The primary structure comprises 326 residues: MNALTPHFPVMLDEVLSALEPHADGLYVDGTFGNGGYSRGLLERADCRVIAIDRDPAARVRGAALEAEFPGRFTLLSGCFGDMEQLLAAEGISRIDGVALDLGVSSMQLDQAERGFSFQKDGPLDMRMGQQGQTAADLVNTLDEDRLADILYHYGEERKSRWVAHAIVERRAETPFSRTADLATVIRGVVRKSRDGIDPATRSFQALRIVVNDELGELERALGASERLLRAGGRLVVVAFHSLEDRIVKAFVRQRCGESEGVSRHLPQASNAGAGNPPPSFQAVSRRAVKPLDAETRVNPRSRSARLRAVERTEFPAWTVSPGGQR.

S-adenosyl-L-methionine-binding positions include 35–37 (GGY), Asp-53, Phe-80, Asp-101, and Gln-108. Residues 260 to 306 (EGVSRHLPQASNAGAGNPPPSFQAVSRRAVKPLDAETRVNPRSRSAR) form a disordered region.

The protein belongs to the methyltransferase superfamily. RsmH family.

The protein localises to the cytoplasm. It catalyses the reaction cytidine(1402) in 16S rRNA + S-adenosyl-L-methionine = N(4)-methylcytidine(1402) in 16S rRNA + S-adenosyl-L-homocysteine + H(+). Specifically methylates the N4 position of cytidine in position 1402 (C1402) of 16S rRNA. The polypeptide is Ribosomal RNA small subunit methyltransferase H (Rhodospirillum rubrum (strain ATCC 11170 / ATH 1.1.1 / DSM 467 / LMG 4362 / NCIMB 8255 / S1)).